Consider the following 264-residue polypeptide: Phosphonoacetaldehyde hydrolase (264 aa).

The Nucleophile role is filled by Asp9. Positions 9 and 11 each coordinate Mg(2+). The active-site Schiff-base intermediate with substrate is Lys50. Asp183 is a Mg(2+) binding site.

The protein belongs to the HAD-like hydrolase superfamily. PhnX family. In terms of assembly, homodimer. Mg(2+) is required as a cofactor.

The catalysed reaction is phosphonoacetaldehyde + H2O = acetaldehyde + phosphate + H(+). Its function is as follows. Involved in phosphonate degradation. This is Phosphonoacetaldehyde hydrolase from Bacillus anthracis.